The primary structure comprises 416 residues: UDP-N-acetylglucosamine 1-carboxyvinyltransferase (416 aa).

22–23 (KN) contacts phosphoenolpyruvate. R92 is a UDP-N-acetyl-alpha-D-glucosamine binding site. Catalysis depends on C116, which acts as the Proton donor. Residue C116 is modified to 2-(S-cysteinyl)pyruvic acid O-phosphothioketal. The UDP-N-acetyl-alpha-D-glucosamine site is built by D306 and I328.

The protein belongs to the EPSP synthase family. MurA subfamily.

Its subcellular location is the cytoplasm. The enzyme catalyses phosphoenolpyruvate + UDP-N-acetyl-alpha-D-glucosamine = UDP-N-acetyl-3-O-(1-carboxyvinyl)-alpha-D-glucosamine + phosphate. Its pathway is cell wall biogenesis; peptidoglycan biosynthesis. In terms of biological role, cell wall formation. Adds enolpyruvyl to UDP-N-acetylglucosamine. The polypeptide is UDP-N-acetylglucosamine 1-carboxyvinyltransferase (Buchnera aphidicola subsp. Baizongia pistaciae (strain Bp)).